Consider the following 70-residue polypeptide: U2-agatoxin-Ao1p (70 aa).

Residues 1-20 (MRAIISLILISAMVFSMIAA) form the signal peptide. A propeptide spanning residues 21–34 (VPXXEGLQLSEDER) is cleaved from the precursor. 3 disulfides stabilise this stretch: Cys-37/Cys-53, Cys-44/Cys-58, and Cys-52/Cys-68. Position 69 is a leucine amide (Leu-69).

This sequence belongs to the neurotoxin 01 (U2-agtx) family. Expressed by the venom gland.

It is found in the secreted. Insect active toxin causing rapid but reversible paralysis in crickets. No activity shown in mammals. Does not show effect on mammalian voltage-gated calcium channels. The protein is U2-agatoxin-Ao1p of Agelena orientalis (Funnel-web spider).